We begin with the raw amino-acid sequence, 597 residues long: ATP-dependent lipid A-core flippase (597 aa).

6 helical membrane-spanning segments follow: residues 26–46 (WIFA…TGLA), 65–85 (IQII…ANFI), 144–164 (ILTI…MAYL), 166–186 (GLLT…IWWV), 250–270 (AISQ…VIHL), and 276–296 (MLAQ…MLLL). Residues 29 to 311 (AASIITMAIY…LTKINGTLQR (283 aa)) enclose the ABC transmembrane type-1 domain. Residues 343–579 (IRFEHLSFCY…ESHYAGLYRL (237 aa)) form the ABC transporter domain. 377-384 (GHSGSGKS) lines the ATP pocket.

This sequence belongs to the ABC transporter superfamily. Lipid exporter (TC 3.A.1.106) family. Homodimer.

The protein localises to the cell inner membrane. It carries out the reaction ATP + H2O + lipid A-core oligosaccharideSide 1 = ADP + phosphate + lipid A-core oligosaccharideSide 2.. Functionally, involved in lipopolysaccharide (LPS) biosynthesis. Translocates lipid A-core from the inner to the outer leaflet of the inner membrane. Transmembrane domains (TMD) form a pore in the inner membrane and the ATP-binding domain (NBD) is responsible for energy generation. This is ATP-dependent lipid A-core flippase from Nitrosococcus oceani (strain ATCC 19707 / BCRC 17464 / JCM 30415 / NCIMB 11848 / C-107).